The following is a 483-amino-acid chain: Regulatory protein ViaA (483 aa).

Belongs to the ViaA family. Homodimer. Interacts with RavA.

Its subcellular location is the cytoplasm. Its function is as follows. Component of the RavA-ViaA chaperone complex, which may act on the membrane to optimize the function of some of the respiratory chains. ViaA stimulates the ATPase activity of RavA. This chain is Regulatory protein ViaA, found in Shigella boydii serotype 18 (strain CDC 3083-94 / BS512).